The primary structure comprises 290 residues: 30 kDa spicule matrix protein alpha (290 aa).

The N-terminal stretch at Met1–Ala20 is a signal peptide. Residues Ala92–Pro162 form the C-type lectin domain. N-linked (GlcNAc...) asparagine glycosylation occurs at Asn102.

In terms of tissue distribution, accumulates exclusively in mineralized tissues.

Functionally, matrix protein of the sea urchin embryo spicule. The function of the matrix proteins is to direct crystal growth in certain orientations and inhibit growth in others. This Strongylocentrotus purpuratus (Purple sea urchin) protein is 30 kDa spicule matrix protein alpha (SM30A).